Consider the following 469-residue polypeptide: Alpha,alpha-trehalose-phosphate synthase [UDP-forming] (469 aa).

D-glucose 6-phosphate-binding residues include Y87 and D141. Residues R279 and K284 each contribute to the UDP site. UDP-alpha-D-glucose-binding residues include R279 and K284. R317 is a binding site for D-glucose 6-phosphate. A UDP-alpha-D-glucose-binding site is contributed by 378–386 (DGMNLVSYE). 382 to 386 (LVSYE) provides a ligand contact to UDP.

This sequence belongs to the glycosyltransferase 20 family.

It catalyses the reaction D-glucose 6-phosphate + UDP-alpha-D-glucose = alpha,alpha-trehalose 6-phosphate + UDP + H(+). It participates in carbohydrate biosynthesis. Functionally, synthase catalytic subunit of the trehalose synthase complex that catalyzes the production of trehalose from glucose-6-phosphate and UDP-alpha-D-glucose in a two step process. The disaccharide trehalose serves as a storage carbohydrate that is mobilized during spore germination. The sequence is that of Alpha,alpha-trehalose-phosphate synthase [UDP-forming] from Yarrowia lipolytica (strain CLIB 122 / E 150) (Yeast).